A 53-amino-acid chain; its full sequence is Light-harvesting protein B800/850/890 beta-1 chain (53 aa).

Over 1–19 the chain is Cytoplasmic; it reads ADNMSLTGLSDEEAKEFHS. H18 and H36 together coordinate a bacteriochlorophyll. Residues 20–42 traverse the membrane as a helical segment; sequence IFMQSFLIFTAVAVVAHFLAWAW. Residues 43–53 are Periplasmic-facing; it reads RPWIPGAEGYG.

This sequence belongs to the antenna complex beta subunit family. The core complex is formed by different alpha and beta chains, binding bacteriochlorophyll molecules, and arranged most probably in tetrameric structures disposed around the reaction center. The non-pigmented gamma chains may constitute additional components.

It localises to the cell inner membrane. Functionally, antenna complexes are light-harvesting systems, which transfer the excitation energy to the reaction centers. This Halorhodospira halophila (strain DSM 244 / SL1) (Ectothiorhodospira halophila (strain DSM 244 / SL1)) protein is Light-harvesting protein B800/850/890 beta-1 chain.